The following is a 342-amino-acid chain: Succinylglutamate desuccinylase (342 aa).

Residues His-62, Glu-65, and His-158 each contribute to the Zn(2+) site. Residue Glu-222 is part of the active site.

It belongs to the AspA/AstE family. Succinylglutamate desuccinylase subfamily. Requires Zn(2+) as cofactor.

The enzyme catalyses N-succinyl-L-glutamate + H2O = L-glutamate + succinate. Its pathway is amino-acid degradation; L-arginine degradation via AST pathway; L-glutamate and succinate from L-arginine: step 5/5. Transforms N(2)-succinylglutamate into succinate and glutamate. In Shewanella frigidimarina (strain NCIMB 400), this protein is Succinylglutamate desuccinylase.